We begin with the raw amino-acid sequence, 1351 residues long: Non-structural polyprotein 1AB (1351 aa).

Residues 105–144 adopt a coiled-coil conformation; sequence LVQDHKAKTREVEDLKSQLSQLRMEHEILRHEYERLKLKS. Transmembrane regions (helical) follow at residues 153-173, 231-251, 257-277, 304-324, and 337-357; these read LKVLLFSLLLGLLFAGVTNGA, LVFQTVFNWYFCATALAVYYM, PIVMFVTLALATLSQFQLLAV, ISILVSFCVLVLSVMIGTFMA, and VVFAIVCYSHVAMILNIPPWV. Residues histidine 452, aspartate 481, and serine 544 each act as charge relay system; for serine protease activity in the active site. Residues 579–635 are a coiled coil; that stretch reads EVRKISKREQELEDRVKQLEGMLNMDQAYVDSNLIVDLVREAVQREMKVLRTELANL. The residue at position 662 (tyrosine 662) is an O-(5'-phospho-RNA)-tyrosine. A compositionally biased stretch (acidic residues) spans 687–699; that stretch reads YDDEDEQSEEEAG. Disordered regions lie at residues 687 to 708 and 822 to 842; these read YDDEDEQSEEEAGYPDWSDPGD and RKRVQQPKKLQRGPEDPGPEE. The segment covering 822–832 has biased composition (basic residues); that stretch reads RKRVQQPKKLQ. The segment covering 833–842 has biased composition (basic and acidic residues); sequence RGPEDPGPEE. The region spanning 1085 to 1217 is the RdRp catalytic domain; the sequence is PYWIEFDWTR…TSPSVPNDYV (133 aa).

The protein belongs to the astroviridae polyprotein 1AB family. As to quaternary structure, monomer. Cleaved by the viral and host proteases. The protease is probably autocatalytically cleaved.

Its subcellular location is the host membrane. The catalysed reaction is RNA(n) + a ribonucleoside 5'-triphosphate = RNA(n+1) + diphosphate. Responsible for the cleavage of the polyprotein into functional products. Its function is as follows. Protein covalently attached to the 5' extremity of the genomic and subgenomic RNAs. It may serve as a primer for the replicase. The chain is Non-structural polyprotein 1AB (ORF1) from Ovis aries (Sheep).